The following is a 270-amino-acid chain: 3-methyl-2-oxobutanoate hydroxymethyltransferase (270 aa).

The Mg(2+) site is built by D50 and D89. Residues 50 to 51 (DS), D89, and K118 each bind 3-methyl-2-oxobutanoate. E120 lines the Mg(2+) pocket. The Proton acceptor role is filled by E187.

It belongs to the PanB family. As to quaternary structure, homodecamer; pentamer of dimers. Requires Mg(2+) as cofactor.

It is found in the cytoplasm. It carries out the reaction 3-methyl-2-oxobutanoate + (6R)-5,10-methylene-5,6,7,8-tetrahydrofolate + H2O = 2-dehydropantoate + (6S)-5,6,7,8-tetrahydrofolate. It participates in cofactor biosynthesis; (R)-pantothenate biosynthesis; (R)-pantoate from 3-methyl-2-oxobutanoate: step 1/2. Its function is as follows. Catalyzes the reversible reaction in which hydroxymethyl group from 5,10-methylenetetrahydrofolate is transferred onto alpha-ketoisovalerate to form ketopantoate. The polypeptide is 3-methyl-2-oxobutanoate hydroxymethyltransferase (Helicobacter acinonychis (strain Sheeba)).